The primary structure comprises 445 residues: Probable protein phosphatase 2C 14 (445 aa).

Positions 120–440 constitute a PPM-type phosphatase domain; that stretch reads GFGVVSRNGK…DDITVVIIDL (321 aa). Mn(2+) is bound by residues D156, G157, and D318. The segment at 384–404 is disordered; it reads NSENESPSLNREIGSSPSKSP. Residues 390–404 show a composition bias toward polar residues; the sequence is PSLNREIGSSPSKSP. D431 lines the Mn(2+) pocket.

The protein belongs to the PP2C family. Requires Mg(2+) as cofactor. The cofactor is Mn(2+).

The catalysed reaction is O-phospho-L-seryl-[protein] + H2O = L-seryl-[protein] + phosphate. It catalyses the reaction O-phospho-L-threonyl-[protein] + H2O = L-threonyl-[protein] + phosphate. The polypeptide is Probable protein phosphatase 2C 14 (Arabidopsis thaliana (Mouse-ear cress)).